The following is a 354-amino-acid chain: Isopentenyl-diphosphate delta-isomerase (354 aa).

6–7 is a binding site for substrate; that stretch reads RK. Residues 63-65, S93, and N122 contribute to the FMN site; that span reads AMT. 93-95 serves as a coordination point for substrate; it reads SQR. A substrate-binding site is contributed by Q160. Mg(2+) is bound at residue E161. FMN is bound by residues K192, T221, 273-275, and 294-295; these read GIR and SQ.

Belongs to the IPP isomerase type 2 family. Homooctamer. Dimer of tetramers. FMN is required as a cofactor. Requires NADPH as cofactor. It depends on Mg(2+) as a cofactor.

The protein localises to the cytoplasm. The enzyme catalyses isopentenyl diphosphate = dimethylallyl diphosphate. Involved in the biosynthesis of isoprenoids. Catalyzes the 1,3-allylic rearrangement of the homoallylic substrate isopentenyl (IPP) to its allylic isomer, dimethylallyl diphosphate (DMAPP). This chain is Isopentenyl-diphosphate delta-isomerase, found in Pyrobaculum islandicum (strain DSM 4184 / JCM 9189 / GEO3).